Consider the following 72-residue polypeptide: Probable transcription factor elt-4 (72 aa).

The segment at C16–C40 adopts a GATA-type zinc-finger fold.

The protein resides in the nucleus. In terms of biological role, probable transcription factor. Plays a role in regulating heme-dependent expression of heme transporter hrg-1. Modulates lifespan in a daf-16-dependent manner. The chain is Probable transcription factor elt-4 from Caenorhabditis elegans.